The primary structure comprises 802 residues: Phenylalanine--tRNA ligase beta subunit (802 aa).

The tRNA-binding domain occupies 38-149 (KSSLKPFVIA…ADAPVGTSFA (112 aa)). A B5 domain is found at 399-474 (HKPKIVSFPI…RIHGVDNIAP (76 aa)). The Mg(2+) site is built by aspartate 452, aspartate 458, glutamate 461, and glutamate 462. The FDX-ACB domain occupies 708–801 (SAFQAVKRDF…VGKQTGGVLR (94 aa)).

This sequence belongs to the phenylalanyl-tRNA synthetase beta subunit family. Type 1 subfamily. As to quaternary structure, tetramer of two alpha and two beta subunits. Mg(2+) is required as a cofactor.

The protein resides in the cytoplasm. The enzyme catalyses tRNA(Phe) + L-phenylalanine + ATP = L-phenylalanyl-tRNA(Phe) + AMP + diphosphate + H(+). The chain is Phenylalanine--tRNA ligase beta subunit from Mesorhizobium japonicum (strain LMG 29417 / CECT 9101 / MAFF 303099) (Mesorhizobium loti (strain MAFF 303099)).